Consider the following 370-residue polypeptide: MRVKEQLLTLRAYVPGKNIEEVKREYGLSKIVKLASNENPFGCSARVTEALTSLASQYALYPDGHAFELRTKVAKHLGVKAEQLLFGSGLDEVIQMISRALLHEGTNVVMANPTFSQYHHHAVIEGAEVREVSLKDGIHDLDAMLQQVDDQTKIVWICNPNNPTGTYVEKQKLLSFLESVPKSALVIMDEAYYEYAGAEDYPQTLPLLEKYENLMVLRTFSKAYGLAAFRIGYAVGNTELIGQLEVARLPFNTSTVAQSVALAALEDQAFLQECVKKNEEGLHQYYAFCKEYNVFYYPSQTNFIFLKLGIPGNEAFERLMKKGYIVRSGAAFGIDDGIRITVGLKEENDEIIELLKELVNEQVQKEETYS.

Lys222 carries the N6-(pyridoxal phosphate)lysine modification.

The protein belongs to the class-II pyridoxal-phosphate-dependent aminotransferase family. Histidinol-phosphate aminotransferase subfamily. Homodimer. Requires pyridoxal 5'-phosphate as cofactor.

It carries out the reaction L-histidinol phosphate + 2-oxoglutarate = 3-(imidazol-4-yl)-2-oxopropyl phosphate + L-glutamate. The protein operates within amino-acid biosynthesis; L-histidine biosynthesis; L-histidine from 5-phospho-alpha-D-ribose 1-diphosphate: step 7/9. This chain is Histidinol-phosphate aminotransferase 1, found in Bacillus thuringiensis subsp. konkukian (strain 97-27).